We begin with the raw amino-acid sequence, 492 residues long: Forkhead box protein O6 (492 aa).

Disordered regions lie at residues 1–76 (MAAK…EVGP), 163–235 (SWWM…ASPA), 315–338 (GAGLPEGLLDGAQDAYGPRPAPRP), and 466–492 (FNFDSALPPPPPGLAGAPPPNQSWVPG). A DNA-binding region (fork-head) is located at residues 88-182 (WGNLSYADLI…KTGKTPRRRA (95 aa)). Residue S184 is modified to Phosphoserine. Positions 192 to 203 (LRIKGKASKKKQ) are enriched in basic residues. Positions 225–235 (PAAAKWAASPA) are enriched in low complexity. A compositionally biased stretch (pro residues) spans 472-486 (LPPPPPGLAGAPPPN).

Post-translationally, phosphorylation of Ser-184 is be important in regulating the transacriptional activity.

The protein localises to the cytoplasm. Its subcellular location is the nucleus. Functionally, transcriptional activator. This Homo sapiens (Human) protein is Forkhead box protein O6 (FOXO6).